Reading from the N-terminus, the 310-residue chain is Lymphotoxin-beta (310 aa).

Over 1–27 the chain is Cytoplasmic; that stretch reads MGALGLQGRGGRPQGTGCLLLAVAGAT. Residues 28–48 traverse the membrane as a helical; Signal-anchor for type II membrane protein segment; it reads SLVTLLLAVPITVLAVLALVP. At 49-310 the chain is on the extracellular side; it reads QEQGGLVMES…LGKCLHSANV (262 aa). The tract at residues 67–86 is disordered; sequence QGLSKSNGLPSRLHSQIPSS. One can recognise a THD domain in the interval 138 to 293; the sequence is PAAHLIGAWM…GKTFFGAVMV (156 aa). Asparagine 272 carries an N-linked (GlcNAc...) asparagine glycan.

This sequence belongs to the tumor necrosis factor family. As to quaternary structure, heterotrimer of either two LTB and one LTA subunits or (less prevalent) two LTA and one LTB subunits.

The protein localises to the membrane. Its function is as follows. Cytokine that binds to LTBR/TNFRSF3. May play a specific role in immune response regulation. Provides the membrane anchor for the attachment of the heterotrimeric complex to the cell surface. In Marmota monax (Woodchuck), this protein is Lymphotoxin-beta (LTB).